Consider the following 642-residue polypeptide: Threonine--tRNA ligase (642 aa).

The 61-residue stretch at 1–61 (MPVITLPDGS…ETDATLSIIT (61 aa)) folds into the TGS domain. The catalytic stretch occupies residues 243–534 (DHRKIGKQLD…LTEETAGYFP (292 aa)). Positions 334, 385, and 511 each coordinate Zn(2+).

The protein belongs to the class-II aminoacyl-tRNA synthetase family. Homodimer. Requires Zn(2+) as cofactor.

It localises to the cytoplasm. The catalysed reaction is tRNA(Thr) + L-threonine + ATP = L-threonyl-tRNA(Thr) + AMP + diphosphate + H(+). Functionally, catalyzes the attachment of threonine to tRNA(Thr) in a two-step reaction: L-threonine is first activated by ATP to form Thr-AMP and then transferred to the acceptor end of tRNA(Thr). Also edits incorrectly charged L-seryl-tRNA(Thr). This chain is Threonine--tRNA ligase, found in Tolumonas auensis (strain DSM 9187 / NBRC 110442 / TA 4).